The following is a 242-amino-acid chain: ATP synthase subunit 4, mitochondrial (242 aa).

The transit peptide at 1 to 35 (MSFRALTMRSAVARTALNNTIRSARVATPYLGIRH) directs the protein to the mitochondrion.

Belongs to the eukaryotic ATPase B chain family. As to quaternary structure, F-type ATPases have 2 components, CF(1) - the catalytic core - and CF(0) - the membrane proton channel. In yeast, the dimeric form of ATP synthase consists of 17 polypeptides: alpha, beta, gamma, delta, epsilon, 4 (B), 5 (OSCP), 6 (A), 8, 9 (C), d, E (Tim11), f, g, h, i/j and k.

The protein localises to the mitochondrion. The protein resides in the mitochondrion inner membrane. Mitochondrial membrane ATP synthase (F(1)F(0) ATP synthase or Complex V) produces ATP from ADP in the presence of a proton gradient across the membrane which is generated by electron transport complexes of the respiratory chain. F-type ATPases consist of two structural domains, F(1) - containing the extramembraneous catalytic core, and F(0) - containing the membrane proton channel, linked together by a central stalk and a peripheral stalk. During catalysis, ATP synthesis in the catalytic domain of F(1) is coupled via a rotary mechanism of the central stalk subunits to proton translocation. Part of the complex F(0) domain and the peripheric stalk, which acts as a stator to hold the catalytic alpha(3)beta(3) subcomplex and subunit a/ATP6 static relative to the rotary elements. The protein is ATP synthase subunit 4, mitochondrial (ATP4) of Candida glabrata (strain ATCC 2001 / BCRC 20586 / JCM 3761 / NBRC 0622 / NRRL Y-65 / CBS 138) (Yeast).